Consider the following 255-residue polypeptide: Type III pantothenate kinase (255 aa).

6–13 (DVGNTNIV) serves as a coordination point for ATP. Substrate is bound by residues Y100 and 107–110 (GADR). Residue D109 is the Proton acceptor of the active site. D129 provides a ligand contact to K(+). T132 provides a ligand contact to ATP. Residue T184 coordinates substrate.

It belongs to the type III pantothenate kinase family. In terms of assembly, homodimer. NH4(+) serves as cofactor. The cofactor is K(+).

The protein resides in the cytoplasm. It catalyses the reaction (R)-pantothenate + ATP = (R)-4'-phosphopantothenate + ADP + H(+). It functions in the pathway cofactor biosynthesis; coenzyme A biosynthesis; CoA from (R)-pantothenate: step 1/5. Catalyzes the phosphorylation of pantothenate (Pan), the first step in CoA biosynthesis. The protein is Type III pantothenate kinase of Geobacter sulfurreducens (strain ATCC 51573 / DSM 12127 / PCA).